Here is a 711-residue protein sequence, read N- to C-terminus: Probable cyclic nucleotide-gated ion channel 10 (711 aa).

Residues 1–81 (MAFSHDNRVR…QDSFLQNWNK (81 aa)) lie on the Cytoplasmic side of the membrane. The chain crosses the membrane as a helical span at residues 82–102 (IFLFACVVALAIDPLFFYIPI). At 103–116 (VDSARHCLTLDSKL) the chain is on the extracellular side. A helical transmembrane segment spans residues 117–137 (EIAASLLRTLIDAFYIIHIVF). The Cytoplasmic segment spans residues 138–170 (QFRTAYIAPSSRVFGRGELVDDAKAIALKYLSS). The chain crosses the membrane as a helical span at residues 171-191 (YFIIDLLSILPLPQIVVLAVI). At 192 to 204 (PSVNQPVSLLTKD) the chain is on the extracellular side. The helical transmembrane segment at 205 to 225 (YLKFSIIAQYVPRILRMYPLY) threads the bilayer. At 226–243 (TEVTRTSGIVTETAWAGA) the chain is on the cytoplasmic side. Residues 244–264 (AWNLSLYMLASHVFGALWYLI) traverse the membrane as a helical segment. Topologically, residues 265–366 (SVEREDRCWQ…GQNLQTSKFV (102 aa)) are extracellular. A helical transmembrane segment spans residues 367–387 (GEIIFAISICISGLVLFALLI). The Cytoplasmic segment spans residues 388–711 (GNMQKYLEST…DFTANHTTDP (324 aa)). A nucleoside 3',5'-cyclic phosphate contacts are provided by residues 473-603 (LFEI…TFRF) and Glu-544. The calmodulin-binding stretch occupies residues 589 to 604 (FRRLHSKQLQHTFRFY). One can recognise an IQ domain in the interval 609 to 638 (RTWSVSFIQAAWRRYCRRKLAKSLRDEEDR). Positions 689 to 711 (YTLPLLPQKPTEPDFTANHTTDP) are disordered.

It belongs to the cyclic nucleotide-gated cation channel (TC 1.A.1.5) family. Homotetramer or heterotetramer.

The protein resides in the cell membrane. Probable cyclic nucleotide-gated ion channel. In Arabidopsis thaliana (Mouse-ear cress), this protein is Probable cyclic nucleotide-gated ion channel 10 (CNGC10).